Consider the following 302-residue polypeptide: N-acetylmuramic acid 6-phosphate etherase (302 aa).

One can recognise an SIS domain in the interval 58 to 221 (IGESFLNGGR…STGAMVKTGK (164 aa)). Glu86 serves as the catalytic Proton donor. Residue Glu117 is part of the active site.

Belongs to the GCKR-like family. MurNAc-6-P etherase subfamily. As to quaternary structure, homodimer.

The catalysed reaction is N-acetyl-D-muramate 6-phosphate + H2O = N-acetyl-D-glucosamine 6-phosphate + (R)-lactate. It participates in amino-sugar metabolism; N-acetylmuramate degradation. Functionally, specifically catalyzes the cleavage of the D-lactyl ether substituent of MurNAc 6-phosphate, producing GlcNAc 6-phosphate and D-lactate. This Clostridium botulinum (strain Langeland / NCTC 10281 / Type F) protein is N-acetylmuramic acid 6-phosphate etherase.